The following is a 171-amino-acid chain: Lipoprotein signal peptidase (171 aa).

2 helical membrane-spanning segments follow: residues 67–87 (YALL…LWRS) and 88–108 (TSKL…GNAY). Catalysis depends on residues aspartate 118 and aspartate 136. Residues 127 to 147 (FSWYVFNLADAAIVAGVALLL) traverse the membrane as a helical segment.

Belongs to the peptidase A8 family.

The protein resides in the cell inner membrane. It catalyses the reaction Release of signal peptides from bacterial membrane prolipoproteins. Hydrolyzes -Xaa-Yaa-Zaa-|-(S,diacylglyceryl)Cys-, in which Xaa is hydrophobic (preferably Leu), and Yaa (Ala or Ser) and Zaa (Gly or Ala) have small, neutral side chains.. It functions in the pathway protein modification; lipoprotein biosynthesis (signal peptide cleavage). Functionally, this protein specifically catalyzes the removal of signal peptides from prolipoproteins. The chain is Lipoprotein signal peptidase from Methylocella silvestris (strain DSM 15510 / CIP 108128 / LMG 27833 / NCIMB 13906 / BL2).